Consider the following 657-residue polypeptide: Threonine--tRNA ligase (657 aa).

Positions 7–70 (DRQQVIITLP…TENARVSIIT (64 aa)) constitute a TGS domain. Residues 253 to 555 (DHRKLGAELG…LIEHTAGNFP (303 aa)) are catalytic. Residues C351, H402, and H532 each contribute to the Zn(2+) site.

Belongs to the class-II aminoacyl-tRNA synthetase family. Homodimer. It depends on Zn(2+) as a cofactor.

Its subcellular location is the cytoplasm. The enzyme catalyses tRNA(Thr) + L-threonine + ATP = L-threonyl-tRNA(Thr) + AMP + diphosphate + H(+). In terms of biological role, catalyzes the attachment of threonine to tRNA(Thr) in a two-step reaction: L-threonine is first activated by ATP to form Thr-AMP and then transferred to the acceptor end of tRNA(Thr). Also edits incorrectly charged L-seryl-tRNA(Thr). The polypeptide is Threonine--tRNA ligase (Chlorobaculum tepidum (strain ATCC 49652 / DSM 12025 / NBRC 103806 / TLS) (Chlorobium tepidum)).